The primary structure comprises 28 residues: Probable small spore coat assembly protein B (28 aa).

Residues 4–24 traverse the membrane as a helical segment; that stretch reads VFAGGFALLVVLFILLIIIGA.

This sequence belongs to the SscA family.

It localises to the membrane. The sequence is that of Probable small spore coat assembly protein B from Bacillus subtilis (strain 168).